The primary structure comprises 468 residues: Peripherin (468 aa).

Low complexity predominate over residues 1 to 16; it reads MSHHSSGLRSSISSTS. The disordered stretch occupies residues 1–22; sequence MSHHSSGLRSSISSTSYRRTFG. A head region spans residues 1–96; the sequence is MSHHSSGLRS…FLATRSNEKQ (96 aa). A 3'-nitrotyrosine modification is found at Tyr-17. A phosphoserine mark is found at Ser-28, Ser-50, and Ser-59. In terms of domain architecture, IF rod spans 94-404; the sequence is EKQELQELND…KLLEGEESRI (311 aa). The tract at residues 97–129 is coil 1A; that stretch reads ELQELNDRFANFIEKVRFLEQQNAALRGELSQA. The interval 130 to 140 is linker 1; sequence RGQEPARADQL. The segment at 141–236 is coil 1B; sequence CQQELRELRR…KLHEEELRDL (96 aa). The segment at 237-259 is linker 2; sequence QVSVESQQVQQVEVEATVKPELT. The segment at 260 to 402 is coil 2; that stretch reads AALRDIRAQY…YRKLLEGEES (143 aa). Tyr-376 carries the post-translational modification 3'-nitrotyrosine. Residues 403 to 468 form a tail region; it reads RISVPVHSFA…ELDKSSIHSY (66 aa). The segment at 445 to 468 is disordered; it reads GEKVVTESQKEQHSELDKSSIHSY. Tyr-468 is modified (phosphotyrosine).

This sequence belongs to the intermediate filament family. As to quaternary structure, forms homodimers (in vitro). Homopolymerizes into a filamentous network (in vitro). Forms heterodimers with NEFL, NEFM or NEFH (in vitro). Interacts with DST (via C-terminus). Interacts with RAB7A; the interaction is direct. Interacts with PRKCE (via phorbol-ester/DAG-type 2 domain). Phosphorylated; phosphorylation increases after nerve injury in regenerating neurons. In terms of tissue distribution, expressed in hypoglossal motor neurons (at protein level). Expressed in the small and large sensory neurons of the dorsal root ganglion (at protein level). Expressed in cutaneous and muscular sensory neurons.

Its subcellular location is the cytoplasm. It is found in the cytoskeleton. It localises to the cell projection. The protein resides in the axon. The protein localises to the perikaryon. Its function is as follows. Class-III neuronal intermediate filament protein. My form an independent structural network without the involvement of other neurofilaments or may cooperate with the neuronal intermediate filament proteins NEFL, NEFH, NEFM and INA to form a filamentous network. Assembly of the neuronal intermediate filaments may be regulated by RAB7A. Plays a role in the development of unmyelinated sensory neurons. May be involved in axon elongation and axon regeneration after injury. Inhibits neurite extension in type II spiral ganglion neurons in the cochlea. This chain is Peripherin (Prph), found in Rattus norvegicus (Rat).